A 310-amino-acid chain; its full sequence is Olfactory receptor 7A42 (310 aa).

The Extracellular segment spans residues 1–25; the sequence is MESGNSTRRIPSFFLLGFSENPHLQ. Asn-5 is a glycosylation site (N-linked (GlcNAc...) asparagine). The helical transmembrane segment at 26 to 46 threads the bilayer; sequence FLIFVLFLSMYLVTVLGNLLI. Residues 47 to 67 are Cytoplasmic-facing; sequence IMVIITQSPLHTPMYFFLANL. The helical transmembrane segment at 68–88 threads the bilayer; the sequence is SFVDICFTSTTVPKMLVNIQT. The Extracellular portion of the chain corresponds to 89 to 100; sequence QSKAITYADCIS. Cys-98 and Cys-190 are joined by a disulfide. Residues 101–121 form a helical membrane-spanning segment; the sequence is QMSVFLVFAELDNFLLAVMAY. Residues 122–135 lie on the Cytoplasmic side of the membrane; that stretch reads DRYVAICHPLYYTF. A helical transmembrane segment spans residues 136–156; sequence IVNQHLCILMVLLSWVVSILH. The Extracellular segment spans residues 157-202; that stretch reads AFLQSSIVLQLTFCGDVKIPHFFCELNQLSQLTCLDSLSSHLIMNL. Residues 203–223 traverse the membrane as a helical segment; sequence VPVLLAVISFSSILYSYFKIV. The Cytoplasmic portion of the chain corresponds to 224 to 240; that stretch reads SSICSISSVQGKYTAFS. The chain crosses the membrane as a helical span at residues 241 to 261; the sequence is TCVSHLSIVFLFYSTGLGVYV. The Extracellular portion of the chain corresponds to 262–272; that stretch reads SSAVVQSSHSA. Residues 273–293 traverse the membrane as a helical segment; it reads ARASVMYTVVTPMLNPFIYSL. Residues 294 to 310 are Cytoplasmic-facing; sequence RNKDVKKALERLLEGKL.

It belongs to the G-protein coupled receptor 1 family.

The protein localises to the cell membrane. Odorant receptor. In Mus musculus (Mouse), this protein is Olfactory receptor 7A42.